We begin with the raw amino-acid sequence, 533 residues long: Probable RNA-binding protein 46 (533 aa).

3 RRM domains span residues 61–139, 141–223, and 236–308; these read CEVF…VSLD, CRLF…WADP, and KVLY…LAKP. Residues 338–362 are disordered; sequence ESHSKSLGKPPTLPTRLNGQHSPSP.

Interacts with YTHDC2, MEIOC, MOV10, CNOT6L, DDX4, UPF1 and PABPC1. As to expression, expressed in the testis and ovary (at protein level). Expressed in spermatogonia and spermatocytes in testis (at protein level).

It is found in the cytoplasm. Essential for male and female fertility, playing a crucial role in regulating germ cell development by ensuring the proper progression of meiosis prophase I. Regulates mitotic-to-meiotic transition in spermatogenesis by forming a complex with MEIOC and YTHDC2 which recognizes and down-regulates mitotic transcripts for a successful meiotic entry. Required for normal synaptonemal complex formation during meiosis, binding meiotic cohesin subunit mRNAs containing GCCUAU/GUUCGA motifs in their 3'UTRs regions and positively regulating their translation. Required for spermatogonial differentiation in both developing and adult testis. The sequence is that of Probable RNA-binding protein 46 from Mus musculus (Mouse).